We begin with the raw amino-acid sequence, 583 residues long: L-arabonate dehydratase (583 aa).

[4Fe-4S] cluster contacts are provided by Cys56, Cys124, and Cys197.

It belongs to the IlvD/Edd family. As to quaternary structure, homodimer. [4Fe-4S] cluster serves as cofactor.

The enzyme catalyses L-arabinonate = 2-dehydro-3-deoxy-L-arabinonate + H2O. With respect to regulation, activity is enhanced by Mg(2+), being optimal with a concentration of 1-10 mM Mg(2+). Its function is as follows. Catalyzes the dehydration of L-arabonate to L-2-keto-3-deoxyarabonate (L-KDA). Is involved in a degradation pathway of L-arabinose that allows A.brasilense to grow on L-arabinose as a sole carbon source. To a lesser extent, can also use D-xylonate as substrate, but not D-galactonate, D-arabonate, and D-gluconate. The protein is L-arabonate dehydratase (araC) of Azospirillum brasilense.